The chain runs to 464 residues: Probable LL-diaminopimelate aminotransferase, chloroplastic (464 aa).

Residues 1–39 constitute a chloroplast transit peptide; the sequence is MAASPAAGAAAATVSSFVSPSSFSSVKASKPDRLRPARR. Residue Gly-102 coordinates substrate. Tyr-132 lines the pyridoxal 5'-phosphate pocket. Substrate is bound by residues Glu-135, Lys-167, Tyr-190, and Asn-247. Pyridoxal 5'-phosphate is bound by residues Asn-247, Asp-275, Tyr-278, Ser-305, and Ser-307. N6-(pyridoxal phosphate)lysine is present on Lys-308. Pyridoxal 5'-phosphate is bound at residue Arg-316. The substrate site is built by Asn-347 and Arg-442.

Belongs to the class-I pyridoxal-phosphate-dependent aminotransferase family. LL-diaminopimelate aminotransferase subfamily. Homodimer. The cofactor is pyridoxal 5'-phosphate.

The protein resides in the plastid. The protein localises to the chloroplast. It catalyses the reaction (2S,6S)-2,6-diaminopimelate + 2-oxoglutarate = (S)-2,3,4,5-tetrahydrodipicolinate + L-glutamate + H2O + H(+). It participates in amino-acid biosynthesis; L-lysine biosynthesis via DAP pathway; LL-2,6-diaminopimelate from (S)-tetrahydrodipicolinate (aminotransferase route): step 1/1. Required for lysine biosynthesis. Catalyzes the direct conversion of tetrahydrodipicolinate to LL-diaminopimelate, a reaction that requires three enzymes in E.coli. This is Probable LL-diaminopimelate aminotransferase, chloroplastic (AGD2) from Oryza sativa subsp. japonica (Rice).